The chain runs to 883 residues: Integrator complex subunit 6 (883 aa).

The VWFA domain occupies Ile3–Val227. Residues Met625 to Glu632 carry the Inhibitory loop motif. Residues Arg666 to Thr686 are disordered. The residue at position 800 (Ser800) is a Phosphoserine.

Belongs to the Integrator subunit 6 family. In terms of assembly, component of the Integrator complex, composed of core subunits INTS1, INTS2, INTS3, INTS4, INTS5, INTS6, INTS7, INTS8, INTS9/RC74, INTS10, INTS11/CPSF3L, INTS12, INTS13, INTS14 and INTS15. The core complex associates with protein phosphatase 2A subunits PPP2CA and PPP2R1A, to form the Integrator-PP2A (INTAC) complex.

The protein localises to the nucleus. The protein resides in the chromosome. Functionally, component of the integrator complex, a multiprotein complex that terminates RNA polymerase II (Pol II) transcription in the promoter-proximal region of genes. The integrator complex provides a quality checkpoint during transcription elongation by driving premature transcription termination of transcripts that are unfavorably configured for transcriptional elongation: the complex terminates transcription by (1) catalyzing dephosphorylation of the C-terminal domain (CTD) of Pol II subunit POLR2A/RPB1 and SUPT5H/SPT5, (2) degrading the exiting nascent RNA transcript via endonuclease activity and (3) promoting the release of Pol II from bound DNA. The integrator complex is also involved in terminating the synthesis of non-coding Pol II transcripts, such as enhancer RNAs (eRNAs), small nuclear RNAs (snRNAs), telomerase RNAs and long non-coding RNAs (lncRNAs). Within the integrator complex, INTS6 acts as a molecular adapter that promotes assembly of protein phosphatase 2A (PP2A) subunits to the integrator core complex, promoting recruitment of PP2A to transcription pause-release checkpoint. Mediates recruitment of cytoplasmic dynein to the nuclear envelope, probably as component of the integrator complex. The polypeptide is Integrator complex subunit 6 (Ints6) (Mus musculus (Mouse)).